The chain runs to 160 residues: MRLLLWVLISMLSIALSSCAAASADSNERLVRAVYSTVRSRDLATDDGPKHTKRFLRGESSKIVNLKQEEGVFEERKGVSQKLTKALQAIKARYLKWEQKVLVPGFKKMAEKGVTYSELRDTFRVRMMNSGRWGTPSGFKRYARLYSEWLHRTGRSHLAK.

An N-terminal signal peptide occupies residues 1-21; the sequence is MRLLLWVLISMLSIALSSCAA. The short motif at 54–76 is the RxLR-dEER element; the sequence is RFLRGESSKIVNLKQEEGVFEER.

The protein belongs to the RxLR effector family.

Its subcellular location is the secreted. The protein resides in the host cell membrane. It is found in the host nucleus. The protein localises to the host nucleolus. Functionally, effector that is involved in host plant infection. Contributes to virulence during the early infection stage, by inhibiting plant defense responses induced by both PAMP-triggered immunity (PTI) and effector-triggered immunity (ETI). The polypeptide is RxLR effector protein PexRD44 (Phytophthora infestans (strain T30-4) (Potato late blight agent)).